The primary structure comprises 241 residues: Hybrid peroxiredoxin hyPrx5 (241 aa).

The Thioredoxin domain occupies 3-167 (SMEGKKVPQV…MLKYLAPQHQ (165 aa)). The active-site Cysteine sulfenic acid (-SOH) intermediate; for peroxiredoxin activity is Cys-49. In terms of domain architecture, Glutaredoxin spans 170 to 241 (ESISIFTKPG…GSDDLEKYFA (72 aa)). A disulfide bond links Cys-180 and Cys-183.

In the N-terminal section; belongs to the peroxiredoxin family. Prx5 subfamily. It in the C-terminal section; belongs to the glutaredoxin family. As to quaternary structure, homotetramer; interconnecting Prx and Grx domains of different monomers.

The enzyme catalyses a hydroperoxide + 2 glutathione = an alcohol + glutathione disulfide + H2O. Functionally, thiol-specific peroxidase that catalyzes the reduction of hydrogen peroxide and organic hydroperoxides to water and alcohols, respectively. Plays a role in cell protection against oxidative stress by detoxifying peroxides. The chain is Hybrid peroxiredoxin hyPrx5 (PGdx) from Haemophilus influenzae (strain ATCC 51907 / DSM 11121 / KW20 / Rd).